Consider the following 220-residue polypeptide: Pyrrolidone-carboxylate peptidase (220 aa).

Active-site residues include Glu-80, Cys-143, and His-167.

Belongs to the peptidase C15 family. In terms of assembly, homotetramer.

It localises to the cytoplasm. The catalysed reaction is Release of an N-terminal pyroglutamyl group from a polypeptide, the second amino acid generally not being Pro.. Its function is as follows. Removes 5-oxoproline from various penultimate amino acid residues except L-proline. This Thermococcus litoralis (strain ATCC 51850 / DSM 5473 / JCM 8560 / NS-C) protein is Pyrrolidone-carboxylate peptidase (pcp).